Reading from the N-terminus, the 225-residue chain is THAP domain-containing protein 1 A (225 aa).

The THAP-type zinc-finger motif lies at C5–H57. The stretch at V139–G194 forms a coiled coil.

This sequence belongs to the THAP1 family.

It is found in the nucleus. The protein localises to the nucleoplasm. DNA-binding transcription regulator that regulates endothelial cell proliferation and G1/S cell-cycle progression. Specifically binds the 5'-[AT]NTNN[GT]GGCA[AGT]-3' core DNA sequence and acts by modulating expression of pRB-E2F cell-cycle target genes. The chain is THAP domain-containing protein 1 A (thap1-a) from Xenopus laevis (African clawed frog).